The sequence spans 313 residues: Intelectin-1b (313 aa).

The first 19 residues, 1–19 (MTQLGFLLFIMIATRVCSA), serve as a signal peptide directing secretion. Residues 32-251 (SFFSSLPRSC…NNERAASALC (220 aa)) form the Fibrinogen C-terminal domain. An intrachain disulfide couples Cys-41 to Cys-70. Ca(2+)-binding residues include His-86, Glu-87, Asn-89, Gly-92, Gly-97, Asp-98, and Asp-133. 3 cysteine pairs are disulfide-bonded: Cys-94–Cys-280, Cys-199–Cys-259, and Cys-251–Cys-265. Residue Asn-163 is glycosylated (N-linked (GlcNAc...) asparagine). Ca(2+)-binding residues include Asn-260, Glu-262, Glu-274, and Asp-282. Residues 262 to 263 (EH) and Glu-274 contribute to the a carbohydrate site. Ser-298 carries the GPI-anchor amidated serine lipid modification. Positions 299-313 (NSREITEAAVLLFYR) are excised as a propeptide.

Expressed in the globlet and Paneth cells of the small intestine of infected mice. Expressed in the ileum of uninfected mice.

The protein localises to the cell membrane. Its subcellular location is the secreted. Its function is as follows. May play a protective role in the innate immune response to parasite infection. In Mus musculus (Mouse), this protein is Intelectin-1b (Itln1b).